The following is a 447-amino-acid chain: MTAHEVNFDGLVGLTHHYAGLSFGNEASTRHRFQVSNPRLAVKQGLLKMKALADAGFPQAVIPPHERPFIPALRQLGFTGSDEQILDKVARQAPRWLSSVSSASPMWVANAATVCPSADALDGKVHLTVANLNNKFHRALEAPVTEALLRAIFRDESQFSVHSALPQVALLGDEGAANHNRLGGEYGSAGVQLFVYGREEENEIRPARYPARQSREASEAVARLNQVNPQQVIFAQQNPEVIDQGVFHNDVIAVSNRQVLFCHEAAFARQKVLINQLRTRVDGFMAIEVPAGEVSVSDAVAPYLFNSQLLSRDDGSMLLVLPRECQDHAGVWRYLNKLVAEDNPISAMQVFDLRESMANGGGPACLRLRVVLTEEERRAVNPAVMMNDALFTALNAWADRYYRDRLTAADLADPLLLREGREALDVLTRLLDLGSVYPFQQTGAADG.

Residues 19–28, Asn110, and 137–138 contribute to the substrate site; these read AGLSFGNEAS and HR. The active site involves Glu174. Arg212 lines the substrate pocket. His248 is an active-site residue. The substrate site is built by Asp250 and Asn359. The active-site Nucleophile is the Cys365.

Belongs to the succinylarginine dihydrolase family. Homodimer.

It catalyses the reaction N(2)-succinyl-L-arginine + 2 H2O + 2 H(+) = N(2)-succinyl-L-ornithine + 2 NH4(+) + CO2. The protein operates within amino-acid degradation; L-arginine degradation via AST pathway; L-glutamate and succinate from L-arginine: step 2/5. Functionally, catalyzes the hydrolysis of N(2)-succinylarginine into N(2)-succinylornithine, ammonia and CO(2). The protein is N-succinylarginine dihydrolase of Salmonella paratyphi A (strain ATCC 9150 / SARB42).